The primary structure comprises 93 residues: Small ribosomal subunit protein uS19 (93 aa).

This sequence belongs to the universal ribosomal protein uS19 family.

Its function is as follows. Protein S19 forms a complex with S13 that binds strongly to the 16S ribosomal RNA. The polypeptide is Small ribosomal subunit protein uS19 (Mycolicibacterium paratuberculosis (strain ATCC BAA-968 / K-10) (Mycobacterium paratuberculosis)).